The primary structure comprises 59 residues: UPF0434 protein PMI0721 (59 aa).

It belongs to the UPF0434 family.

The polypeptide is UPF0434 protein PMI0721 (Proteus mirabilis (strain HI4320)).